The sequence spans 342 residues: S-adenosylmethionine:tRNA ribosyltransferase-isomerase (342 aa).

It belongs to the QueA family. Monomer.

The protein localises to the cytoplasm. The catalysed reaction is 7-aminomethyl-7-carbaguanosine(34) in tRNA + S-adenosyl-L-methionine = epoxyqueuosine(34) in tRNA + adenine + L-methionine + 2 H(+). Its pathway is tRNA modification; tRNA-queuosine biosynthesis. Functionally, transfers and isomerizes the ribose moiety from AdoMet to the 7-aminomethyl group of 7-deazaguanine (preQ1-tRNA) to give epoxyqueuosine (oQ-tRNA). The polypeptide is S-adenosylmethionine:tRNA ribosyltransferase-isomerase (Listeria innocua serovar 6a (strain ATCC BAA-680 / CLIP 11262)).